The chain runs to 399 residues: Elongation factor Tu (399 aa).

One can recognise a tr-type G domain in the interval 10–204 (KPHVNIGTIG…AVDASIPEPE (195 aa)). The segment at 19–26 (GHVDHGKT) is G1. 19 to 26 (GHVDHGKT) lines the GTP pocket. Mg(2+) is bound at residue Thr26. The segment at 60 to 64 (GITIN) is G2. Residues 81 to 84 (DCPG) are G3. GTP is bound by residues 81–85 (DCPGH) and 136–139 (NKCD). A G4 region spans residues 136-139 (NKCD). The segment at 174–176 (SGL) is G5.

It belongs to the TRAFAC class translation factor GTPase superfamily. Classic translation factor GTPase family. EF-Tu/EF-1A subfamily. Monomer.

Its subcellular location is the cytoplasm. It catalyses the reaction GTP + H2O = GDP + phosphate + H(+). Its function is as follows. GTP hydrolase that promotes the GTP-dependent binding of aminoacyl-tRNA to the A-site of ribosomes during protein biosynthesis. This is Elongation factor Tu from Prochlorococcus marinus (strain SARG / CCMP1375 / SS120).